We begin with the raw amino-acid sequence, 104 residues long: DET1- and DDB1-associated protein 1 (104 aa).

Residues 67 to 77 (KKNAAKKREQE) show a composition bias toward basic and acidic residues. The disordered stretch occupies residues 67-104 (KKNAAKKREQEQAEGEGGSPAPPRKIARTDSQEMNEDS).

The protein belongs to the DDA1 family. As to quaternary structure, component of numerous DCX (DDB1-CUL4-X-box) E3 ubiquitin-protein ligase complexes which consist of a core of DDB1, cullin-4 (CUL4A or CUL4B), DDA1 and RBX1.

Its pathway is protein modification; protein ubiquitination. In terms of biological role, functions as a component of numerous distinct DCX (DDB1-CUL4-X-box) E3 ubiquitin-protein ligase complexes which mediate the ubiquitination and subsequent proteasomal degradation of target proteins. In the DCX complexes, acts as a scaffolding subunit required to stabilize the complex. In Danio rerio (Zebrafish), this protein is DET1- and DDB1-associated protein 1.